The following is a 203-amino-acid chain: Small ribosomal subunit protein uS7 (203 aa).

Residues 1–21 (MSSEAPEPDAPASTDDERVSA) form a disordered region.

The protein belongs to the universal ribosomal protein uS7 family. Part of the 30S ribosomal subunit.

Functionally, one of the primary rRNA binding proteins, it binds directly to 16S rRNA where it nucleates assembly of the head domain of the 30S subunit. Is located at the subunit interface close to the decoding center. The polypeptide is Small ribosomal subunit protein uS7 (Natronomonas pharaonis (strain ATCC 35678 / DSM 2160 / CIP 103997 / JCM 8858 / NBRC 14720 / NCIMB 2260 / Gabara) (Halobacterium pharaonis)).